Consider the following 214-residue polypeptide: tRNA (guanine-N(7)-)-methyltransferase (214 aa).

4 residues coordinate S-adenosyl-L-methionine: glutamate 45, glutamate 70, aspartate 97, and aspartate 119. Aspartate 119 is an active-site residue. Substrate-binding positions include lysine 123, aspartate 155, and 192-195; that span reads TEYE.

It belongs to the class I-like SAM-binding methyltransferase superfamily. TrmB family.

It carries out the reaction guanosine(46) in tRNA + S-adenosyl-L-methionine = N(7)-methylguanosine(46) in tRNA + S-adenosyl-L-homocysteine. It functions in the pathway tRNA modification; N(7)-methylguanine-tRNA biosynthesis. Functionally, catalyzes the formation of N(7)-methylguanine at position 46 (m7G46) in tRNA. The sequence is that of tRNA (guanine-N(7)-)-methyltransferase from Clostridioides difficile (strain 630) (Peptoclostridium difficile).